The sequence spans 770 residues: Arf-GAP with coiled-coil, ANK repeat and PH domain-containing protein 2 (770 aa).

In terms of domain architecture, BAR spans 6 to 226 (DFEECLKDSP…MKDLGAQLDR (221 aa)). The PH domain occupies 266–361 (GIVMEGYLFK…WIKAVQTSIA (96 aa)). The disordered stretch occupies residues 371 to 392 (SEKLDKKSSPSTGSLDSGSESK). Low complexity predominate over residues 379-388 (SPSTGSLDSG). Phosphoserine occurs at positions 384 and 387. The Arf-GAP domain maps to 399–520 (ESALQRVQCI…KFVDKYSTLL (122 aa)). A C4-type zinc finger spans residues 414–437 (CCDCGLADPRWASINLGITLCIEC). A Phosphoserine modification is found at Ser-521. The span at 548 to 561 (TPVKSNDSGIQQCS) shows a compositional bias: polar residues. The segment at 548–571 (TPVKSNDSGIQQCSDDGRESLPST) is disordered. Phosphoserine is present on residues Ser-573 and Ser-576. 3 ANK repeats span residues 632–661 (NQATPLIQAVLGGSLVTCEFLLQNGANVNQ), 665–694 (QGRGPLHHATVLGHTGQVCLFLKRGANQHA), and 698–727 (EGKDPLSIAVEAANADIVTLLRLARMNEEM). Residue Tyr-734 is modified to Phosphotyrosine. At Ser-767 the chain carries Phosphoserine.

As to quaternary structure, interacts with RAB35 (GTP-bound form); the interaction is direct and probably recruits ACAP2 to membranes. Interacts with MICALL1; the interaction is indirect through RAB35.

The protein resides in the endosome membrane. Its subcellular location is the cell membrane. GAP activity stimulated by phosphatidylinositol 4,5-bisphosphate (PIP2) and phosphatidic acid. Functionally, GTPase-activating protein (GAP) for ADP ribosylation factor 6 (ARF6). Doesn't show GAP activity for RAB35. The polypeptide is Arf-GAP with coiled-coil, ANK repeat and PH domain-containing protein 2 (Acap2) (Rattus norvegicus (Rat)).